The primary structure comprises 405 residues: Double C2-like domain-containing protein alpha (405 aa).

The tract at residues 1-94 is interaction with UNC13D and DYNLT1; it reads MRGRRGDRMT…DSYDSDDTTA (94 aa). Positions 34-54 are disordered; that stretch reads DYFPRRGPGPEGGGGGGGTGC. Gly residues predominate over residues 42 to 54; it reads GPEGGGGGGGTGC. C2 domains lie at 94 to 216 and 256 to 389; these read ALGT…HFNI and ERGR…ERWH. Positions 125, 131, 186, 188, 287, 293, 347, 349, and 355 each coordinate Ca(2+). Residues 220–405 are interaction with UNC13D; sequence RQVPLPSPSS…PPAAGAYPLA (186 aa).

Interacts (via N-terminus) with UNC13A. Interacts with cytoplasmic dynein light chain DYNLT1. Interacts with UNC13D. Ca(2+) serves as cofactor. In terms of tissue distribution, brain and mast cells.

The protein localises to the cytoplasmic vesicle. Its subcellular location is the secretory vesicle. The protein resides in the synaptic vesicle membrane. It localises to the synapse. It is found in the synaptosome. The protein localises to the lysosome. Functionally, calcium sensor which most probably regulates fusion of vesicles with membranes. Binds calcium and phospholipids. May be involved in calcium dependent neurotransmitter release through the interaction with UNC13A. May be involved in calcium-dependent spontaneous release of neurotransmitter in absence of action potentials in neuronal cells. Regulates Ca(2+)-dependent secretory lysosome exocytosis in mast cells. The protein is Double C2-like domain-containing protein alpha (Doc2a) of Mus musculus (Mouse).